The primary structure comprises 291 residues: Gamma-soluble NSF attachment protein (291 aa).

The protein belongs to the SNAP family.

It is found in the membrane. Its function is as follows. Required for vesicular transport between the endoplasmic reticulum and the Golgi apparatus. Binds to SNARE complex and then recruits NSF to disassemble it. The protein is Gamma-soluble NSF attachment protein (GSNAP) of Arabidopsis thaliana (Mouse-ear cress).